The following is a 557-amino-acid chain: MALSTFKREHIKKNLRNDEYDLVIIGGGITGAGIALDASERGMKVALVEMQDFAQGTSSRSTKLVHGGLRYLKQFQIGVVAETGKERAIVYENGPHVTTPEWMLLPMHKGGTFGKFSTSIGLGMYDRLAGVKKSERKKMLSKKETLAKEPLVKKEGLKGGGYYVEYRTDDARLTIEVMKRAAEKGAEIINYTKSEHFTYDKNQQVNGVNVIDKLTNENYTIKAKKVVNAAGPWVDDVRSGDYARNNKKLRLTKGVHVVIDQSKFPLGQAVYFDTEKDGRMIFAIPREGKAYVGTTDTFYDNIKSSPLTTQEDRDYLIDAINYMFPSVNVTDEDIESTWAGIRPLIYEEGKDPSEISRKDEIWEGKSGLLTIAGGKLTGYRHMAQDIVDLVSKRLKKDYGLTFSPCNTKGLAISGGDVGGSKNFDAFVEQKVDVAKGFGIDEDVARRLASKYGSNVDELFNIAQTSQYHDSKLPLEIYVELVYSIQQEMVYKPNDFLVRRSGKMYFNIKDVLDYKDSIIDIMADMLDYSPAQIEAYTEEVEQAIKEAQHGNNQPAVKE.

Residue 21–49 (DLVIIGGGITGAGIALDASERGMKVALVE) coordinates FAD.

This sequence belongs to the FAD-dependent glycerol-3-phosphate dehydrogenase family. FAD serves as cofactor.

It localises to the cytoplasm. It carries out the reaction a quinone + sn-glycerol 3-phosphate = dihydroxyacetone phosphate + a quinol. Its pathway is polyol metabolism; glycerol degradation via glycerol kinase pathway; glycerone phosphate from sn-glycerol 3-phosphate (aerobic route): step 1/1. This is Aerobic glycerol-3-phosphate dehydrogenase (glpD) from Staphylococcus aureus (strain MRSA252).